The chain runs to 142 residues: 3-hydroxyacyl-[acyl-carrier-protein] dehydratase FabZ (142 aa).

Residue H47 is part of the active site.

Belongs to the thioester dehydratase family. FabZ subfamily.

It is found in the cytoplasm. The enzyme catalyses a (3R)-hydroxyacyl-[ACP] = a (2E)-enoyl-[ACP] + H2O. Its function is as follows. Involved in unsaturated fatty acids biosynthesis. Catalyzes the dehydration of short chain beta-hydroxyacyl-ACPs and long chain saturated and unsaturated beta-hydroxyacyl-ACPs. In Coxiella burnetii (strain RSA 331 / Henzerling II), this protein is 3-hydroxyacyl-[acyl-carrier-protein] dehydratase FabZ.